The chain runs to 256 residues: Agamous-like MADS-box protein AGL18 (256 aa).

The 61-residue stretch at 1 to 61 (MGRGRIEIKK…GKIYDFSSVC (61 aa)) folds into the MADS-box domain. Residues 94-184 (NEAVLRNDDS…RKQVEMLGRG (91 aa)) form the K-box domain. The segment at 179-232 (EMLGRGSGPKVLNERPQDSSPEADPESSSSEEDENDNEEHHSDTSLQLGLSSTG) is disordered. A compositionally biased stretch (acidic residues) spans 199–215 (PEADPESSSSEEDENDN). The span at 222-232 (TSLQLGLSSTG) shows a compositional bias: polar residues.

Mostly expressed in pollen, roots, flowers and siliques, and to a lower extent, in stems and leaves. Expressed in the endosperm and in developing male and female gametophytes. Also present in seedlings.

Its subcellular location is the nucleus. Probable transcription factor involved in the negative regulation of flowering, probably through the photoperiodic pathway. Prevents premature flowering. Downstream regulator of a subset of the MIKC* MADS-controlled genes required during pollen maturation. In Arabidopsis thaliana (Mouse-ear cress), this protein is Agamous-like MADS-box protein AGL18 (AGL18).